The primary structure comprises 47 residues: Protein PsbN (47 aa).

A helical membrane pass occupies residues 7–29 (VAISISCLLISFTGYALYTAFGN).

It belongs to the PsbN family.

It localises to the plastid membrane. In terms of biological role, may play a role in photosystem I and II biogenesis. This is Protein PsbN from Aneura mirabilis (Parasitic liverwort).